The chain runs to 154 residues: 6,7-dimethyl-8-ribityllumazine synthase (154 aa).

Residues Trp23, 57-59, and 81-83 contribute to the 5-amino-6-(D-ribitylamino)uracil site; these read AFE and AVI. (2S)-2-hydroxy-3-oxobutyl phosphate is bound at residue 86 to 87; sequence AT. The active-site Proton donor is the His89. Phe114 lines the 5-amino-6-(D-ribitylamino)uracil pocket. Arg128 lines the (2S)-2-hydroxy-3-oxobutyl phosphate pocket.

It belongs to the DMRL synthase family.

The enzyme catalyses (2S)-2-hydroxy-3-oxobutyl phosphate + 5-amino-6-(D-ribitylamino)uracil = 6,7-dimethyl-8-(1-D-ribityl)lumazine + phosphate + 2 H2O + H(+). It participates in cofactor biosynthesis; riboflavin biosynthesis; riboflavin from 2-hydroxy-3-oxobutyl phosphate and 5-amino-6-(D-ribitylamino)uracil: step 1/2. Catalyzes the formation of 6,7-dimethyl-8-ribityllumazine by condensation of 5-amino-6-(D-ribitylamino)uracil with 3,4-dihydroxy-2-butanone 4-phosphate. This is the penultimate step in the biosynthesis of riboflavin. The protein is 6,7-dimethyl-8-ribityllumazine synthase of Sulfurimonas denitrificans (strain ATCC 33889 / DSM 1251) (Thiomicrospira denitrificans (strain ATCC 33889 / DSM 1251)).